The following is a 1129-amino-acid chain: Phytochrome A type 3 (1129 aa).

Positions 1 to 21 (MSSSRPASSSSSRNRQSSQAR) are enriched in low complexity. A disordered region spans residues 1–24 (MSSSRPASSSSSRNRQSSQARVLA). The region spanning 217–402 (SMEVLCNTVV…VFAVHVNREF (186 aa)) is the GAF domain. Cys322 contributes to the phytochromobilin binding site. PAS domains lie at 618–688 (VTSE…LQGK) and 748–822 (VEGD…VSLC). The Histidine kinase domain maps to 902–1122 (YMRHAINNPL…TFIITAELAS (221 aa)).

The protein belongs to the phytochrome family. Homodimer. Post-translationally, contains one covalently linked phytochromobilin chromophore.

Regulatory photoreceptor which exists in two forms that are reversibly interconvertible by light: the Pr form that absorbs maximally in the red region of the spectrum and the Pfr form that absorbs maximally in the far-red region. Photoconversion of Pr to Pfr induces an array of morphogenic responses, whereas reconversion of Pfr to Pr cancels the induction of those responses. Pfr controls the expression of a number of nuclear genes including those encoding the small subunit of ribulose-bisphosphate carboxylase, chlorophyll A/B binding protein, protochlorophyllide reductase, rRNA, etc. It also controls the expression of its own gene(s) in a negative feedback fashion. The polypeptide is Phytochrome A type 3 (PHYA3) (Avena sativa (Oat)).